The chain runs to 726 residues: Transmembrane channel-like protein 8 (726 aa).

At 1–114 (MLLPRSVSSE…GIRSYFTFLR (114 aa)) the chain is on the cytoplasmic side. Ser6 carries the phosphoserine modification. Residues 115–135 (FLLLLNLLSLLLTASFVLLPL) form a helical membrane-spanning segment. The Lumenal segment spans residues 136 to 200 (VWLRPPDPGP…VGPESSSVYS (65 aa)). N-linked (GlcNAc...) asparagine glycosylation is present at Asn148. A helical transmembrane segment spans residues 201 to 221 (IRLAYLLSPLACLLLCFCGTL). The Cytoplasmic portion of the chain corresponds to 222 to 299 (RRMVKGLPQK…AQTACRLLSY (78 aa)). A helical membrane pass occupies residues 300–320 (LRVNVLNGLLVVGAISAIFWA). At 321-338 (TKYSQDNKEESLFLLLQY) the chain is on the lumenal side. A helical transmembrane segment spans residues 339–359 (LPPGVIALVNFLGPLLFTFLV). Residues 360-426 (QLENYPPNTE…QCWENSVGEE (67 aa)) lie on the Cytoplasmic side of the membrane. Positions 362-530 (ENYPPNTEVN…SSRPFRASSS (169 aa)) are TMC domain. The chain crosses the membrane as a helical span at residues 427 to 447 (LYKLSIFNFLLTVAFAFLVTL). Residues 448–488 (PRRLLVDRFSGRFWAWLEREEFLVPKNVLDIVAGQTVTWMG) lie on the Lumenal side of the membrane. A helical membrane pass occupies residues 489-509 (LFYCPLLPLLNSVFLFLTFYI). The Cytoplasmic portion of the chain corresponds to 510–531 (KKYTLLKNSRASSRPFRASSST). Residues 532–552 (FFFQLVLLLGLLLAAVPLGYV) form a helical membrane-spanning segment. At 553 to 594 (VSSIHSSWDCGLFTNYSAPWQVVPELVALGLPPIGQRALHYL) the chain is on the lumenal side. N-linked (GlcNAc...) asparagine glycosylation occurs at Asn567. Residues 595 to 615 (GSHAFSFPLLIMLSLVLTVCV) traverse the membrane as a helical segment. Residues 616–726 (SQTQANARAI…RFRFPSGAEL (111 aa)) lie on the Cytoplasmic side of the membrane. Residues 651 to 726 (PEPGPSDSPG…RFRFPSGAEL (76 aa)) are disordered. The segment covering 652-662 (EPGPSDSPGPK) has biased composition (pro residues). Residues Ser658 and Ser673 each carry the phosphoserine modification.

It belongs to the TMC family. In terms of assembly, interacts with TMC6. Interacts and forms a complex with TMC6 and CIB1; the interaction stabilizes each component of the complex. Interacts and forms a complex with TMC6 and SLC30A1/ZNT1; the interaction regulates zinc transport into the ER. Interacts with TRADD; the interaction competes with TRADD/RIPK1/TRAF2/cIAPs complex I formation and facilites complex II formation. As to quaternary structure, (Microbial infection) Interacts with human papillomavirus 16/HPV16 protein E5; the interaction alleviates TMC8-mediated transcription factors inhibition. Expressed in placenta, prostate and testis.

The protein resides in the endoplasmic reticulum membrane. The protein localises to the golgi apparatus membrane. Its subcellular location is the nucleus membrane. Its function is as follows. Acts as a regulatory protein involved in the regulation of numerous cellular processes. Together with its homolog TMC6/EVER1, forms a complex with calcium-binding protein CIB1 in lymphocytes and keratynocytes where TMC6 and TMC8 stabilize CIB1 levels and reciprocally. Together with TMC6, also forms a complex with and activates zinc transporter ZNT1 at the ER membrane of keratynocytes, thereby facilitating zinc uptake into the ER. Also inhibits receptor-mediated calcium release from ER stores and calcium activated and volume regulated chloride channels. Down-regulates the activity of transcription factors induced by zinc and cytokines. Also sequesters TRADD which impairs the recruitment of TRAF2 and RIPK1 in the pro-survival complex I and promotes proapoptotic complex II formation, and may therefore be involved in TNF-induced cell death/survival decisions. This chain is Transmembrane channel-like protein 8, found in Homo sapiens (Human).